We begin with the raw amino-acid sequence, 72 residues long: uncharacterized protein (72 aa).

The chain crosses the membrane as a helical span at residues 33 to 53; that stretch reads VCIFFSLIFFFFFFFFCVNWG.

Its subcellular location is the membrane. This is an uncharacterized protein from Dictyostelium discoideum (Social amoeba).